Reading from the N-terminus, the 424-residue chain is Phosphomethylpyrimidine synthase (424 aa).

Residues methionine 94, tyrosine 123, histidine 162, 184–186 (SRG), 225–228 (NGMR), and glutamate 264 contribute to the substrate site. Residue histidine 268 coordinates Zn(2+). Substrate is bound at residue tyrosine 291. Histidine 332 contributes to the Zn(2+) binding site. [4Fe-4S] cluster is bound by residues cysteine 406, cysteine 409, and cysteine 413.

The protein belongs to the ThiC family. It depends on [4Fe-4S] cluster as a cofactor.

The enzyme catalyses 5-amino-1-(5-phospho-beta-D-ribosyl)imidazole + S-adenosyl-L-methionine = 4-amino-2-methyl-5-(phosphooxymethyl)pyrimidine + CO + 5'-deoxyadenosine + formate + L-methionine + 3 H(+). Its pathway is cofactor biosynthesis; thiamine diphosphate biosynthesis. In terms of biological role, catalyzes the synthesis of the hydroxymethylpyrimidine phosphate (HMP-P) moiety of thiamine from aminoimidazole ribotide (AIR) in a radical S-adenosyl-L-methionine (SAM)-dependent reaction. This Methanoculleus marisnigri (strain ATCC 35101 / DSM 1498 / JR1) protein is Phosphomethylpyrimidine synthase.